The following is a 402-amino-acid chain: LIM/homeobox protein Lhx5 (402 aa).

LIM zinc-binding domains lie at 3-61 and 62-125; these read AHCA…RRFG and TKCA…ASSL. 3 disordered regions span residues 133-187, 291-335, and 365-392; these read VSSC…RTTI, NYDF…GHHP, and SGEV…LPHQ. Residues 151-167 show a composition bias toward basic and acidic residues; that stretch reads DESKETDHSTSSDKETA. Residues 180–239 constitute a DNA-binding region (homeobox); it reads RRGPRTTIKAKQLETLKAAFIATPKPTRHIREQLAQETGLNMRVIQVWFQNRRSKERRMK. The span at 300–319 shows a compositional bias: polar residues; the sequence is PSSQTQSPADSSYLQNSGPG.

Interacts with ldb1 and with the N-terminus of rnf12.

It localises to the nucleus. Its function is as follows. Probably involved in the patterning of the nervous system, in particular in the early specification of the diencephalon. The chain is LIM/homeobox protein Lhx5 (lhx5) from Xenopus laevis (African clawed frog).